We begin with the raw amino-acid sequence, 159 residues long: MTIAVCPGSFDPVTNGHIDVITRCCRLFDEVHVVVAVNAMKKPLFTETERVDIIKHALADSGMTNYVVAWTDGLITDYCRKVDSPVIVKGLRQNGDYEAELGMALVNRHLAYVETMFLPANPVLEHISSSVVKDVARHGGDITGMVPDYVVPLLEKALR.

S9 lines the substrate pocket. ATP-binding positions include 9–10 (SF) and H17. The substrate site is built by K41, I75, and K89. Residues 90 to 92 (GLR), E100, and 124 to 130 (LEHISSS) each bind ATP.

The protein belongs to the bacterial CoaD family. Homohexamer. Mg(2+) is required as a cofactor.

The protein localises to the cytoplasm. The catalysed reaction is (R)-4'-phosphopantetheine + ATP + H(+) = 3'-dephospho-CoA + diphosphate. Its pathway is cofactor biosynthesis; coenzyme A biosynthesis; CoA from (R)-pantothenate: step 4/5. Functionally, reversibly transfers an adenylyl group from ATP to 4'-phosphopantetheine, yielding dephospho-CoA (dPCoA) and pyrophosphate. In Bifidobacterium animalis subsp. lactis (strain AD011), this protein is Phosphopantetheine adenylyltransferase.